Reading from the N-terminus, the 738-residue chain is MTTDSSMPATVIGKAEFSNTKAASEFGTNLSRWRLNVDNGRHMWEYLESEDEARKRPQSILEKYWLGLPYELPARPRATRALEAVENGWEFFKRLQTADGHWGCNDDGPLFVTSGMVIARYIVGIPIDSHMKQEMCRYLLNVVNEDGGWGLFIQSPSTVFGTVMNYCMLRILGLGPEHPAMARARNTLHRLGSASATPTWGKFWLCVLGVYEWEGMIPLPPEPLLVPASLPFNPGKWWVHTRNVYISMSYLYGHRFSMPPNKLVQALRDELYDIPYEQINWPAQRTNVSAADRLTDPTWIQRSFTSALTTYETFKIPFLRRRALNEALFQIETETRNTHYLCIAPVSFASNMLALYHAHGRDSHWIRGMRDRFIDPMWLCREGLAASGTNGTSLWDTALTVQATIDAGLAARPENQAILRKALEFIDNSQIREDPLGVHHVYRQPTRGAWPFSTRDQSYAVSDTTAEAVKVVVLLQQIEGFPSRISDERLQQAIDLILGMENAGGGFSAYEPVRGPKFLELLNITELYENVMTDNLYPECTSSVIMSLTTFAREYPTYRARDIQACVSRSVDYLLRSQYPNGGWFASWGVCFTYATMFALQGLACMGRNESNCAACQRACSFLLQHQNPDGGWGESLDTVRFKQYLPHPDGSQVTNTAYAVIGLLAARCGNHEAIRRGVAYLMKEQQDTGEWLPGALEGVFAPPGGMRYPNYKFHFTLMALGRYAAVHGDECLAAQLV.

The PFTB 1 repeat unit spans residues 132-173; the sequence is KQEMCRYLLNVVNEDGGWGLFIQSPSTVFGTVMNYCMLRILG. The Proton donor role is filled by Asp463. 3 PFTB repeats span residues 490–531, 567–607, and 616–663; these read LQQA…YENV, VSRS…ACMG, and CQRA…AVIG.

Belongs to the terpene cyclase/mutase family.

It catalyses the reaction (S)-2,3-epoxysqualene = (17Z)-protosta-17(20),24-dien-3beta-ol. Functionally, protostadienol synthase which cyclizes (3S)-oxidosqualene to (17Z)-protosta-17(20),24-dien-3-beta-ol (protostadienol), the biosynthetic precursor of helvolic acid, a secondary metabolite which promotes virulence. The chain is Protostadienol synthase A (pdsA) from Neosartorya fischeri (strain ATCC 1020 / DSM 3700 / CBS 544.65 / FGSC A1164 / JCM 1740 / NRRL 181 / WB 181) (Aspergillus fischerianus).